We begin with the raw amino-acid sequence, 289 residues long: Metal-staphylopine import system permease protein CntC (289 aa).

A run of 5 helical transmembrane segments spans residues 13 to 33, 77 to 97, 115 to 135, 194 to 214, and 249 to 269; these read AVIA…APLV, LLYV…LGFL, VMLA…FGMG, IAII…GFSF, and IAIV…QIAI. One can recognise an ABC transmembrane type-1 domain in the interval 73–262; the sequence is IRPSLLYVFV…IIVMAFNFLS (190 aa).

Belongs to the binding-protein-dependent transport system permease family. In terms of assembly, the complex is composed of two ATP-binding proteins (CntD and CntF), two transmembrane proteins (CntB and CntC) and a solute-binding protein (CntA).

Its subcellular location is the cell membrane. Part of the ABC transporter complex CntABCDF (Opp1) involved in the uptake of metal in complex with the metallophore staphylopine (StP). May be involved in the import of a large array of divalent metals ions such as nickel, cobalt, zinc, copper and iron. Probably responsible for the translocation of the substrate across the membrane. This Staphylococcus aureus (strain Mu50 / ATCC 700699) protein is Metal-staphylopine import system permease protein CntC.